Here is a 603-residue protein sequence, read N- to C-terminus: Serine palmitoyltransferase 2 (603 aa).

The helical transmembrane segment at 90–107 (YYYVVATYLTYLVLIIIG) threads the bilayer. Lysine 398 carries the N6-(pyridoxal phosphate)lysine modification.

This sequence belongs to the class-II pyridoxal-phosphate-dependent aminotransferase family. Lcb1 and lcb2 encode essential subunits of the enzyme and form a heterodimer. The cofactor is pyridoxal 5'-phosphate.

Its subcellular location is the cytoplasm. It localises to the endoplasmic reticulum. It is found in the membrane. It catalyses the reaction L-serine + hexadecanoyl-CoA + H(+) = 3-oxosphinganine + CO2 + CoA. Its pathway is lipid metabolism; sphingolipid metabolism. Its function is as follows. Catalytic subunit of serine palmitoyltransferase (SPT), which catalyzes the committed step in the synthesis of sphingolipids, the condensation of serine with palmitoyl CoA to form the long chain base 3-ketosphinganine. The polypeptide is Serine palmitoyltransferase 2 (lcb2) (Schizosaccharomyces pombe (strain 972 / ATCC 24843) (Fission yeast)).